Consider the following 344-residue polypeptide: MRIVLGIESSCDETAAALVATDRTILAQHIASQDEAHAPYGGVVPEIAARAHAERLAPMIEAVMQEAGVDYADLDAIAATAGPGLIGGVMVGLVSAKAIAMAAGKPLIAINHLEGHALSSRLADSELEFPYALLLVSGGHCQILLVEGVGQYRRLATTIDDALGEAFDKTAKILGLGYPGGPAVEKLARDGDAQAVPLPRPMLGSAEPHFSFAGLKSAVLRAKESGDHEDADIAASFQQAAVDCILDRLQVALGGDDWPPALVVAGGVAANQTIRAALEGFAADRSMRFVAPPLALCTDNAAMIGWAGCERLDLEQDDPLDFRARPRWPLDPEAEPVRGAGVKA.

Residues His-112 and His-116 each coordinate Fe cation. Substrate contacts are provided by residues 135–139 (LVSGG), Asp-168, Gly-181, and Asn-271. Asp-299 is a Fe cation binding site. A disordered region spans residues 323 to 344 (RARPRWPLDPEAEPVRGAGVKA).

This sequence belongs to the KAE1 / TsaD family. Fe(2+) is required as a cofactor.

Its subcellular location is the cytoplasm. It catalyses the reaction L-threonylcarbamoyladenylate + adenosine(37) in tRNA = N(6)-L-threonylcarbamoyladenosine(37) in tRNA + AMP + H(+). Functionally, required for the formation of a threonylcarbamoyl group on adenosine at position 37 (t(6)A37) in tRNAs that read codons beginning with adenine. Is involved in the transfer of the threonylcarbamoyl moiety of threonylcarbamoyl-AMP (TC-AMP) to the N6 group of A37, together with TsaE and TsaB. TsaD likely plays a direct catalytic role in this reaction. The sequence is that of tRNA N6-adenosine threonylcarbamoyltransferase from Erythrobacter litoralis (strain HTCC2594).